Consider the following 121-residue polypeptide: Large ribosomal subunit protein bL12 (121 aa).

Belongs to the bacterial ribosomal protein bL12 family. As to quaternary structure, homodimer. Part of the ribosomal stalk of the 50S ribosomal subunit. Forms a multimeric L10(L12)X complex, where L10 forms an elongated spine to which 2 to 4 L12 dimers bind in a sequential fashion. Binds GTP-bound translation factors.

Its function is as follows. Forms part of the ribosomal stalk which helps the ribosome interact with GTP-bound translation factors. Is thus essential for accurate translation. The sequence is that of Large ribosomal subunit protein bL12 from Pectobacterium atrosepticum (strain SCRI 1043 / ATCC BAA-672) (Erwinia carotovora subsp. atroseptica).